The following is a 270-amino-acid chain: uncharacterized protein (270 aa).

Residues 43–112 enclose the J domain; sequence CTANDIKRKY…REEYDRFGIH (70 aa). The segment at 239-270 is disordered; sequence EQSKQIPTQQKPSSLPPPERALPAPTMPTPSS. Positions 242–251 are enriched in polar residues; that stretch reads KQIPTQQKPS. Positions 252–270 are enriched in pro residues; that stretch reads SLPPPERALPAPTMPTPSS.

This is an uncharacterized protein from Schizosaccharomyces pombe (strain 972 / ATCC 24843) (Fission yeast).